Here is a 318-residue protein sequence, read N- to C-terminus: Biotin synthase (318 aa).

Residues 46 to 272 (DGVDVEQLNN…RSVVKISGGR (227 aa)) form the Radical SAM core domain. The [4Fe-4S] cluster site is built by C61, C65, and C68. [2Fe-2S] cluster-binding residues include C105, C138, C197, and K267.

The protein belongs to the radical SAM superfamily. Biotin synthase family. As to quaternary structure, homodimer. The cofactor is [4Fe-4S] cluster. [2Fe-2S] cluster serves as cofactor.

The enzyme catalyses (4R,5S)-dethiobiotin + (sulfur carrier)-SH + 2 reduced [2Fe-2S]-[ferredoxin] + 2 S-adenosyl-L-methionine = (sulfur carrier)-H + biotin + 2 5'-deoxyadenosine + 2 L-methionine + 2 oxidized [2Fe-2S]-[ferredoxin]. It participates in cofactor biosynthesis; biotin biosynthesis; biotin from 7,8-diaminononanoate: step 2/2. Functionally, catalyzes the conversion of dethiobiotin (DTB) to biotin by the insertion of a sulfur atom into dethiobiotin via a radical-based mechanism. This chain is Biotin synthase, found in Cenarchaeum symbiosum (strain A).